A 118-amino-acid polypeptide reads, in one-letter code: Putative pterin-4-alpha-carbinolamine dehydratase (118 aa).

This sequence belongs to the pterin-4-alpha-carbinolamine dehydratase family.

The enzyme catalyses (4aS,6R)-4a-hydroxy-L-erythro-5,6,7,8-tetrahydrobiopterin = (6R)-L-erythro-6,7-dihydrobiopterin + H2O. This chain is Putative pterin-4-alpha-carbinolamine dehydratase, found in Stutzerimonas stutzeri (strain A1501) (Pseudomonas stutzeri).